Consider the following 330-residue polypeptide: uncharacterized protein (330 aa).

Residues alanine 96–leucine 256 form the JmjC domain. The Fe cation site is built by histidine 145, aspartate 147, and histidine 224.

It belongs to the ROX family. Fe(2+) is required as a cofactor.

This is an uncharacterized protein from Bacillus subtilis (strain 168).